We begin with the raw amino-acid sequence, 253 residues long: Prolactin-7A2 (253 aa).

The N-terminal stretch at 1–30 is a signal peptide; it reads MSFSFSQPCPSGALLLVVVSSLLLWENVAS. Residues Asn-36, Asn-103, and Asn-135 are each glycosylated (N-linked (GlcNAc...) asparagine). 2 disulfides stabilise this stretch: Cys-101/Cys-218 and Cys-235/Cys-244.

This sequence belongs to the somatotropin/prolactin family. As to expression, expression restricted to the placental tissue. Expressed only in the spongiotrophoblasts.

The protein resides in the secreted. The protein is Prolactin-7A2 (Prl7a2) of Mus musculus (Mouse).